The chain runs to 532 residues: Maternal protein exuperantia (532 aa).

2 disordered regions span residues 206–251 (CSAS…NAVQ) and 403–491 (TVKP…NGLK). 2 stretches are compositionally biased toward low complexity: residues 220-231 (GSSMVSDSVSIS) and 404-417 (VKPVVKGNSNNNNN). Polar residues predominate over residues 454–467 (SVSSLPDSTTKTPS). Position 467 is a phosphoserine (S467).

As to quaternary structure, component of the osk RNP complex, which is composed of at least exuperantia (exu), ypsilon schachtel (yps), aret (bruno), cup, and the mRNA of osk. In the sponge body, forms a ribonucleoprotein complex (RNP) containing at least me31B, exu, yps and the mRNA of osk; interactions with exu and yps are RNA dependent.

It localises to the cytoplasm. The protein resides in the cytoplasmic ribonucleoprotein granule. Its function is as follows. Ensures the proper localization of the mRNA of the bicoid gene to the anterior regions of the oocyte thus playing a fundamental role in the establishment of the polarity of the oocyte. May bind the bcd mRNA. The protein is Maternal protein exuperantia (exu) of Drosophila melanogaster (Fruit fly).